The chain runs to 164 residues: Sorting nexin-3 (164 aa).

A disordered region spans residues 1-26 (MSGKREFKSFGSTEETMFSQHHKIPS). The segment covering 10-26 (FGSTEETMFSQHHKIPS) has biased composition (polar residues). The PX domain maps to 40-163 (IEVRNPKTHV…IRFIEDDKFV (124 aa)). A 1,2-diacyl-sn-glycero-3-phospho-(1D-myo-inositol-3-phosphate) is bound by residues arginine 83, serine 85, lysine 114, arginine 120, and arginine 129.

The protein belongs to the sorting nexin family.

The protein localises to the cytoplasm. It is found in the golgi apparatus membrane. The protein resides in the prevacuolar compartment membrane. Required for retention of late Golgi membrane proteins. Component of the retrieval machinery that functions by direct interaction with the cytosolic tails of certain TGN membrane proteins during the sorting/budding process at the prevacuolar compartment. Binds phosphatidylinositol 3-phosphate (PtdIns(P3)). The sequence is that of Sorting nexin-3 (SNX3) from Candida glabrata (strain ATCC 2001 / BCRC 20586 / JCM 3761 / NBRC 0622 / NRRL Y-65 / CBS 138) (Yeast).